The chain runs to 400 residues: CCA-adding enzyme (400 aa).

ATP-binding residues include G28 and R31. 2 residues coordinate CTP: G28 and R31. The Mg(2+) site is built by D41 and D43. Residues R112, D155, R158, R161, and R164 each contribute to the ATP site. R112, D155, R158, R161, and R164 together coordinate CTP.

It belongs to the tRNA nucleotidyltransferase/poly(A) polymerase family. Bacterial CCA-adding enzyme type 3 subfamily. Homodimer. It depends on Mg(2+) as a cofactor.

The catalysed reaction is a tRNA precursor + 2 CTP + ATP = a tRNA with a 3' CCA end + 3 diphosphate. It carries out the reaction a tRNA with a 3' CCA end + 2 CTP + ATP = a tRNA with a 3' CCACCA end + 3 diphosphate. In terms of biological role, catalyzes the addition and repair of the essential 3'-terminal CCA sequence in tRNAs without using a nucleic acid template. Adds these three nucleotides in the order of C, C, and A to the tRNA nucleotide-73, using CTP and ATP as substrates and producing inorganic pyrophosphate. tRNA 3'-terminal CCA addition is required both for tRNA processing and repair. Also involved in tRNA surveillance by mediating tandem CCA addition to generate a CCACCA at the 3' terminus of unstable tRNAs. While stable tRNAs receive only 3'-terminal CCA, unstable tRNAs are marked with CCACCA and rapidly degraded. The protein is CCA-adding enzyme of Staphylococcus aureus (strain COL).